The sequence spans 482 residues: Cytochrome P450 monooxygenase pynD (482 aa).

Positions 1-22 (MWRIPVIVALVAGLLYWVRKQG) are cleaved as a signal peptide. Residue Asn-401 is glycosylated (N-linked (GlcNAc...) asparagine). Position 417 (Cys-417) interacts with heme.

It belongs to the cytochrome P450 family. It depends on heme as a cofactor.

It functions in the pathway secondary metabolite biosynthesis. Its function is as follows. Cytochrome P450 monooxygenase; part of the gene cluster that mediates the biosynthesis of pyranonigrins, a family of antioxidative compounds. The first step of pyranonigrins biosynthesis is performed by the hybrid PKS-NRPS synthetase that condenses 6 malonyl-CoA units to an acetyl starter unit, to form a 1,3,5-trioxotetradecane-6,8-dienyl-ACP. The enoyl reductase (ER) domain of pynA is likely to be functional during the first two rounds of polyketide chain extension, to generate the saturated C-C bonds of the alkyl side chain. PynA subsequently forms the amide bond between the acyl chain and L-serine. Although pynA has a terminal reductase domain, it appears to require the thioesterase pynI for the release of the straight-chain intermediate from pynA via the formation of a tetramic acid pyranonigrin J. The methyltransferase pynC then coverts pyranonigrin J to pyranonigrin I via N-methylation. The FAD-dependent monooxygenase pynG catalyzes an epoxidation-mediated cyclization to form the dihydro-gamma-pyrone moiety, followed by pynD-catalyzed oxidation of the alcohol to the ketone and enolization to yield the characteristic tetramic acid-fused gamma-pyrone core of pyranonigrin H. Pyranonigrin H is substrate of pynH for dehydration-mediated exo-methylene formation from the serine side chain to produce pyranonigrin E, before the oxidase pynE reduces the exo-methylene of pyranonigrin E into a pendant methyl to form pyranonigrin G. The FAD-linked oxidoreductase pynB performs the reverse reaction and converts pyranonigrin G back to pyranonigrin E. The chain is Cytochrome P450 monooxygenase pynD from Aspergillus niger (strain ATCC MYA-4892 / CBS 513.88 / FGSC A1513).